Consider the following 366-residue polypeptide: Peptide chain release factor 2 (366 aa).

The residue at position 253 (Gln253) is an N5-methylglutamine.

The protein belongs to the prokaryotic/mitochondrial release factor family. In terms of processing, methylated by PrmC. Methylation increases the termination efficiency of RF2.

It is found in the cytoplasm. In terms of biological role, peptide chain release factor 2 directs the termination of translation in response to the peptide chain termination codons UGA and UAA. This Yersinia pseudotuberculosis serotype I (strain IP32953) protein is Peptide chain release factor 2.